The sequence spans 654 residues: Protein fem-1 homolog A-A (654 aa).

ANK repeat units lie at residues 2–31 (DLHT…REEL), 40–70 (GGGT…SVEA), 82–111 (EGAP…SVNR), 115–145 (TNST…DLEV), 149–178 (HGHT…QVNR), 182–211 (KGNT…RMER), and 214–243 (YGMT…GHEQ). Serine 108 bears the Phosphoserine mark. The tract at residues 242–265 (EQLSGTELPGEGSSQVAGNHCSTP) is disordered. Over residues 253 to 263 (GSSQVAGNHCS) the composition is skewed to polar residues. TPR repeat units lie at residues 283–317 (VEAL…RHQG) and 375–408 (SYYI…QQNN). ANK repeat units lie at residues 519–561 (NGFT…DPDS) and 565–594 (DNNT…HMDA). At serine 608 the chain carries Phosphoserine.

The protein belongs to the fem-1 family. In terms of assembly, component of a CRL2 E3 ubiquitin-protein ligase complex, also named ECS (Elongin BC-CUL2/5-SOCS-box protein) complex, composed of CUL2, Elongin BC (ELOB and ELOC), RBX1 and substrate-specific adapter FEM1A. Interacts with PTGER4. Interacts with NFKB1; the interaction is direct. Post-translationally, phosphorylated; highly phosphorylated in myoblasts and myotubes. Phosphorylation at Ser-108 and Ser-608 promote PGE2-EP4-mediated inhibition of inflammation. Dephosphorylated by protein phosphatase 2A (PP2A). Preferentially expressed in cardiac muscle, brain and liver (at protein level). Also expressed in skeletal muscle.

The protein localises to the mitochondrion. It is found in the cytoplasm. It participates in protein modification; protein ubiquitination. Substrate-recognition component of a Cul2-RING (CRL2) E3 ubiquitin-protein ligase complex of the DesCEND (destruction via C-end degrons) pathway, which recognizes a C-degron located at the extreme C terminus of target proteins, leading to their ubiquitination and degradation. The C-degron recognized by the DesCEND pathway is usually a motif of less than ten residues and can be present in full-length proteins, truncated proteins or proteolytically cleaved forms. The CRL2(FEM1A) complex specifically recognizes proteins with an arginine at the C-terminus: recognizes and binds proteins ending with -Lys/Arg-Xaa-Arg and -Lys/Arg-Xaa-Xaa-Arg C-degrons, such as SIL1 or OR51B2, leading to their ubiquitination and degradation. Involved in PGE2-EP4-mediated inhibition of inflammation of macrophages via interaction with NFKB1 and PTGER4. Promotes inflammation in brain microglia through MAP2K4/MKK4-mediated signaling. This is Protein fem-1 homolog A-A from Mus musculus (Mouse).